Reading from the N-terminus, the 109-residue chain is Small ribosomal subunit protein eS25z (109 aa).

The tract at residues 1–36 (MAPKKDKVPPPSSKPAKSGGGKQKKKKWSKGKQKEK) is disordered. A compositionally biased stretch (basic residues) spans 22–31 (KQKKKKWSKG).

This sequence belongs to the eukaryotic ribosomal protein eS25 family.

The polypeptide is Small ribosomal subunit protein eS25z (RPS25A) (Arabidopsis thaliana (Mouse-ear cress)).